The primary structure comprises 211 residues: MNQTLETGTTTVGITLKDAVIMATERRVTMENFIMHKNGKKLFQIDTYTGMTIAGLVGDAQVLVRYMKAELELYRLQRRVNMPIEAVATLLSNMLNQVKYMPYMVQLLVGGIDTAPHVFSIDAAGGSVEDIYASTGSGSPFVYGVLESQYSEKMTVDEGVDLVIRAISAAKQRDSASGGMIDVAVITRKDGYVQLPTDQIESRIRKLGLIL.

Residues 1–8 (MNQTLETG) constitute a propeptide, removed in mature form; by autocatalysis. Threonine 9 acts as the Nucleophile in catalysis.

The protein belongs to the peptidase T1B family. In terms of assembly, the 20S proteasome core is composed of 14 alpha and 14 beta subunits that assemble into four stacked heptameric rings, resulting in a barrel-shaped structure. The two inner rings, each composed of seven catalytic beta subunits, are sandwiched by two outer rings, each composed of seven alpha subunits. The catalytic chamber with the active sites is on the inside of the barrel. Has a gated structure, the ends of the cylinder being occluded by the N-termini of the alpha-subunits. Is capped at one or both ends by the proteasome regulatory ATPase, PAN.

The protein resides in the cytoplasm. It catalyses the reaction Cleavage of peptide bonds with very broad specificity.. Its activity is regulated as follows. The formation of the proteasomal ATPase PAN-20S proteasome complex, via the docking of the C-termini of PAN into the intersubunit pockets in the alpha-rings, triggers opening of the gate for substrate entry. Interconversion between the open-gate and close-gate conformations leads to a dynamic regulation of the 20S proteasome proteolysis activity. Its function is as follows. Component of the proteasome core, a large protease complex with broad specificity involved in protein degradation. The T.acidophilum proteasome is able to cleave oligopeptides after Tyr, Leu, Phe, and to a lesser extent after Glu and Arg. Thus, displays chymotrypsin-like activity and low level of caspase-like and trypsin-like activities. The protein is Proteasome subunit beta of Thermoplasma acidophilum (strain ATCC 25905 / DSM 1728 / JCM 9062 / NBRC 15155 / AMRC-C165).